A 589-amino-acid chain; its full sequence is Cytoplasmic polyadenylation element-binding protein 2 (589 aa).

Disordered stretches follow at residues 1 to 103 (MPPP…QAAA) and 118 to 140 (PLLK…SMSW). The segment covering 24-33 (FFPSFSPVSP) has biased composition (low complexity). The span at 44-53 (SGGGGGGFGG) shows a compositional bias: gly residues. The segment covering 60–81 (VPPPPPPAMNIPQQQPPPPAAP) has biased composition (pro residues). 2 stretches are compositionally biased toward low complexity: residues 82–103 (QQPQ…QAAA) and 130–140 (SSGWGTGSMSW). Ser-89 is modified (phosphoserine). 2 consecutive RRM domains span residues 332-423 (RKVF…PWNL) and 440-522 (KTIF…PYVL).

It belongs to the RRM CPEB family. In terms of assembly, interacts with TENT2/GLD2.

The protein localises to the cytoplasm. Functionally, may play a role in translational regulation of stored mRNAs in transcriptionally inactive haploid spermatids. Binds to poly(U) RNA oligomers. Required for cell cycle progression, specifically for the transition from metaphase to anaphase. The sequence is that of Cytoplasmic polyadenylation element-binding protein 2 (CPEB2) from Homo sapiens (Human).